We begin with the raw amino-acid sequence, 261 residues long: Cytochrome c oxidase subunit 3 (261 aa).

The Mitochondrial matrix portion of the chain corresponds to 1–15 (MTHQTHAYHMVNPSP). The helical transmembrane segment at 16–34 (WPLTGALSALLMTSGLIMW) threads the bilayer. Over 35 to 40 (FHFNST) the chain is Mitochondrial intermembrane. Residues 41-66 (TLLMLGLTTNMLTMYQWWRDVVREST) traverse the membrane as a helical segment. Over 67-72 (FQGHHT) the chain is Mitochondrial matrix. The chain crosses the membrane as a helical span at residues 73–105 (PNVQKGLRYGMILFIISEVLFFTGFFWAFYHSS). Over 106-128 (LAPTPELGGCWPPTGIHPLNPLE) the chain is Mitochondrial intermembrane. A helical transmembrane segment spans residues 129-152 (VPLLNTSVLLASGVSITWAHHSLM). Topologically, residues 153-155 (EGN) are mitochondrial matrix. The chain crosses the membrane as a helical span at residues 156–183 (RNHMLQALFITIALGVYFTLLQASEYYE). The Mitochondrial intermembrane portion of the chain corresponds to 184–190 (APFTISD). The chain crosses the membrane as a helical span at residues 191-223 (GVYGSTFFVATGFHGLHVIIGSTFLIVCFFRQL). Over 224–232 (KFHFTSSHH) the chain is Mitochondrial matrix. Residues 233-256 (FGFEAAAWYWHFVDVVWLFLYVSI) form a helical membrane-spanning segment. Topologically, residues 257–261 (YWWGS) are mitochondrial intermembrane.

The protein belongs to the cytochrome c oxidase subunit 3 family. Component of the cytochrome c oxidase (complex IV, CIV), a multisubunit enzyme composed of 14 subunits. The complex is composed of a catalytic core of 3 subunits MT-CO1, MT-CO2 and MT-CO3, encoded in the mitochondrial DNA, and 11 supernumerary subunits COX4I, COX5A, COX5B, COX6A, COX6B, COX6C, COX7A, COX7B, COX7C, COX8 and NDUFA4, which are encoded in the nuclear genome. The complex exists as a monomer or a dimer and forms supercomplexes (SCs) in the inner mitochondrial membrane with NADH-ubiquinone oxidoreductase (complex I, CI) and ubiquinol-cytochrome c oxidoreductase (cytochrome b-c1 complex, complex III, CIII), resulting in different assemblies (supercomplex SCI(1)III(2)IV(1) and megacomplex MCI(2)III(2)IV(2)).

The protein resides in the mitochondrion inner membrane. It catalyses the reaction 4 Fe(II)-[cytochrome c] + O2 + 8 H(+)(in) = 4 Fe(III)-[cytochrome c] + 2 H2O + 4 H(+)(out). In terms of biological role, component of the cytochrome c oxidase, the last enzyme in the mitochondrial electron transport chain which drives oxidative phosphorylation. The respiratory chain contains 3 multisubunit complexes succinate dehydrogenase (complex II, CII), ubiquinol-cytochrome c oxidoreductase (cytochrome b-c1 complex, complex III, CIII) and cytochrome c oxidase (complex IV, CIV), that cooperate to transfer electrons derived from NADH and succinate to molecular oxygen, creating an electrochemical gradient over the inner membrane that drives transmembrane transport and the ATP synthase. Cytochrome c oxidase is the component of the respiratory chain that catalyzes the reduction of oxygen to water. Electrons originating from reduced cytochrome c in the intermembrane space (IMS) are transferred via the dinuclear copper A center (CU(A)) of subunit 2 and heme A of subunit 1 to the active site in subunit 1, a binuclear center (BNC) formed by heme A3 and copper B (CU(B)). The BNC reduces molecular oxygen to 2 water molecules using 4 electrons from cytochrome c in the IMS and 4 protons from the mitochondrial matrix. In Gazella spekei (Speke's gazelle), this protein is Cytochrome c oxidase subunit 3 (MT-CO3).